Reading from the N-terminus, the 165-residue chain is Large ribosomal subunit protein uL11 (165 aa).

Ser38 is subject to Phosphoserine. A Glycyl lysine isopeptide (Lys-Gly) (interchain with G-Cter in SUMO2) cross-link involves residue Lys40. Lys48 participates in a covalent cross-link: Glycyl lysine isopeptide (Lys-Gly) (interchain with G-Cter in ubiquitin). Lys54 carries the N6-acetyllysine modification. Lys83 is covalently cross-linked (Glycyl lysine isopeptide (Lys-Gly) (interchain with G-Cter in ubiquitin)). The residue at position 165 (Ser165) is a Phosphoserine.

Belongs to the universal ribosomal protein uL11 family. Component of the large ribosomal subunit. Mature ribosomes consist of a small (40S) and a large (60S) subunit. The 40S subunit contains about 33 different proteins and 1 molecule of RNA (18S). The 60S subunit contains about 49 different proteins and 3 molecules of RNA (28S, 5.8S and 5S). Ubiquitinated at Lys-48 and Lys-83 by RNF14 and RNF25 in response to ribosome collisions (ribosome stalling).

It is found in the cytoplasm. Component of the large ribosomal subunit. The ribosome is a large ribonucleoprotein complex responsible for the synthesis of proteins in the cell. Binds directly to 26S ribosomal RNA. The chain is Large ribosomal subunit protein uL11 (RPL12) from Bos taurus (Bovine).